The sequence spans 48 residues: MPQLVPFYFTNLLTFGMLAISMLLYLVSTIILPNILRLLVARTTMTKL.

Residues 12-32 (LLTFGMLAISMLLYLVSTIIL) form a helical membrane-spanning segment.

The protein belongs to the ATPase protein 8 family. As to quaternary structure, F-type ATPases have 2 components, CF(1) - the catalytic core - and CF(0) - the membrane proton channel.

It localises to the mitochondrion membrane. In terms of biological role, mitochondrial membrane ATP synthase (F(1)F(0) ATP synthase or Complex V) produces ATP from ADP in the presence of a proton gradient across the membrane which is generated by electron transport complexes of the respiratory chain. F-type ATPases consist of two structural domains, F(1) - containing the extramembraneous catalytic core and F(0) - containing the membrane proton channel, linked together by a central stalk and a peripheral stalk. During catalysis, ATP synthesis in the catalytic domain of F(1) is coupled via a rotary mechanism of the central stalk subunits to proton translocation. Part of the complex F(0) domain. Minor subunit located with subunit a in the membrane. This Debaryomyces hansenii (strain ATCC 36239 / CBS 767 / BCRC 21394 / JCM 1990 / NBRC 0083 / IGC 2968) (Yeast) protein is ATP synthase protein 8 (ATP8).